A 1023-amino-acid polypeptide reads, in one-letter code: GATOR2 complex protein WDR24 (1023 aa).

WD repeat units follow at residues 16-54, 64-108, 114-154, 159-199, 203-243, 245-287, and 291-329; these read NLGS…FKVT, SLNY…SKSV, DHSR…NASK, PKSE…IAVE, SHQG…SLNN, STIS…IPLF, and DHRD…KPYQ. The segment covering 563-578 has biased composition (low complexity); it reads SKNIIDNSNDSNQEIN. Disordered regions lie at residues 563-621 and 661-824; these read SKNI…EPPS and QKST…SIEN. Over residues 584 to 593 the composition is skewed to acidic residues; the sequence is KEDEEEDDDN. Residues 661 to 681 show a composition bias toward polar residues; it reads QKSTDNISDNNSNVHVNIKRQ. Over residues 682–695 the composition is skewed to low complexity; it reads NQPTNNNNNNSNID. A compositionally biased stretch (basic and acidic residues) spans 696 to 742; that stretch reads NLEKKSNKSKSTKENKESSLTDQNKQKRNDNKEKIDNNEIDNDNKDN. Acidic residues predominate over residues 743 to 759; it reads NDDDDNDVDNIGEDNDE. Positions 760–812 are enriched in low complexity; the sequence is INNNNDNNNNNNNNNNNNNNNNNNNNNNNNNNNNNNNNKNNNNDNNNNNNINN. Residues 947 to 969 form a C4-type zinc finger; it reads ACSSCGKSIPQNSIICEKCNKAS. Zn(2+) contacts are provided by cysteine 948, cysteine 951, cysteine 962, cysteine 965, cysteine 972, cysteine 975, cysteine 986, cysteine 989, histidine 991, histidine 994, histidine 997, cysteine 1010, cysteine 1014, histidine 1016, and cysteine 1018. Residues 970-1021 form an RING-type; atypical zinc finger; the sequence is SKCSICRLPVKGMWVWCQGCGHGGHLEHMKSWFIDKNQKSCPTGCTHICTPF.

It belongs to the WD repeat WDR24 family. Probably part of the GATOR complex.

It is found in the lysosome membrane. The enzyme catalyses S-ubiquitinyl-[E2 ubiquitin-conjugating enzyme]-L-cysteine + [acceptor protein]-L-lysine = [E2 ubiquitin-conjugating enzyme]-L-cysteine + N(6)-ubiquitinyl-[acceptor protein]-L-lysine.. Its pathway is protein modification; protein ubiquitination. Its function is as follows. As a component of the GATOR complex may function in the amino acid-sensing branch of the TORC1 signaling pathway. In Dictyostelium discoideum (Social amoeba), this protein is GATOR2 complex protein WDR24.